A 226-amino-acid chain; its full sequence is Ribonuclease 3 (226 aa).

Positions 6–128 (INRLQRKLGY…LIGGIFLDSD (123 aa)) constitute an RNase III domain. Glu-41 lines the Mg(2+) pocket. Asp-45 is an active-site residue. The Mg(2+) site is built by Asp-114 and Glu-117. Glu-117 is a catalytic residue. The 71-residue stretch at 155–225 (DPKTRLQEYL…AEQALKQLEL (71 aa)) folds into the DRBM domain.

Belongs to the ribonuclease III family. As to quaternary structure, homodimer. Mg(2+) is required as a cofactor.

It is found in the cytoplasm. The catalysed reaction is Endonucleolytic cleavage to 5'-phosphomonoester.. In terms of biological role, digests double-stranded RNA. Involved in the processing of primary rRNA transcript to yield the immediate precursors to the large and small rRNAs (23S and 16S). Processes some mRNAs, and tRNAs when they are encoded in the rRNA operon. Processes pre-crRNA and tracrRNA of type II CRISPR loci if present in the organism. This chain is Ribonuclease 3, found in Yersinia enterocolitica serotype O:8 / biotype 1B (strain NCTC 13174 / 8081).